The sequence spans 414 residues: CinA-like protein (414 aa).

It belongs to the CinA family.

In Citrifermentans bemidjiense (strain ATCC BAA-1014 / DSM 16622 / JCM 12645 / Bem) (Geobacter bemidjiensis), this protein is CinA-like protein.